The following is a 207-amino-acid chain: Large ribosomal subunit protein uL4 (207 aa).

Residues 57–78 (VAGGGKKPWRQKGTGRARHGSI) form a disordered region. Over residues 63-77 (KPWRQKGTGRARHGS) the composition is skewed to basic residues.

It belongs to the universal ribosomal protein uL4 family. In terms of assembly, part of the 50S ribosomal subunit.

One of the primary rRNA binding proteins, this protein initially binds near the 5'-end of the 23S rRNA. It is important during the early stages of 50S assembly. It makes multiple contacts with different domains of the 23S rRNA in the assembled 50S subunit and ribosome. Functionally, forms part of the polypeptide exit tunnel. This chain is Large ribosomal subunit protein uL4, found in Onion yellows phytoplasma (strain OY-M).